The sequence spans 304 residues: Acetyl-coenzyme A carboxylase carboxyl transferase subunit beta (304 aa).

The region spanning Leu29–Pro298 is the CoA carboxyltransferase N-terminal domain. The Zn(2+) site is built by Cys33, Cys36, Cys52, and Cys55. A C4-type zinc finger spans residues Cys33–Cys55.

Belongs to the AccD/PCCB family. In terms of assembly, acetyl-CoA carboxylase is a heterohexamer composed of biotin carboxyl carrier protein (AccB), biotin carboxylase (AccC) and two subunits each of ACCase subunit alpha (AccA) and ACCase subunit beta (AccD). The cofactor is Zn(2+).

The protein localises to the cytoplasm. The catalysed reaction is N(6)-carboxybiotinyl-L-lysyl-[protein] + acetyl-CoA = N(6)-biotinyl-L-lysyl-[protein] + malonyl-CoA. It functions in the pathway lipid metabolism; malonyl-CoA biosynthesis; malonyl-CoA from acetyl-CoA: step 1/1. Component of the acetyl coenzyme A carboxylase (ACC) complex. Biotin carboxylase (BC) catalyzes the carboxylation of biotin on its carrier protein (BCCP) and then the CO(2) group is transferred by the transcarboxylase to acetyl-CoA to form malonyl-CoA. This Acaryochloris marina (strain MBIC 11017) protein is Acetyl-coenzyme A carboxylase carboxyl transferase subunit beta.